We begin with the raw amino-acid sequence, 417 residues long: Inactive GDSL esterase/lipase-like protein 25 (417 aa).

An N-terminal signal peptide occupies residues 1–50 (MLLIPSFTANSNEPPPSKLSLSDLSMAILKSHFFLLFPLLLLHFHTVSFA). N-linked (GlcNAc...) asparagine glycosylation is found at Asn-160, Asn-308, and Asn-311. The active site involves His-331.

The protein belongs to the 'GDSL' lipolytic enzyme family. In terms of assembly, interacts with the PYK10 complex and TGG2, but not with TGG1 or PEN2. As to expression, expressed throughout the seedling, rosette leaves, roots, inflorescence and imbibed seed, but not in pollen.

The protein localises to the vacuole. It is found in the endoplasmic reticulum. In terms of biological role, involved in organization of the endomembrane system and is required for endoplasmic reticulum morphology and organelle distribution. May act by inhibiting the formation of PYK10 complex by binding to GLL23 and exporting it from the ER. Required for proper subcellular localization of myrosinase TGG2. Has no lipase or esterase activity. The polypeptide is Inactive GDSL esterase/lipase-like protein 25 (MVP1) (Arabidopsis thaliana (Mouse-ear cress)).